Consider the following 118-residue polypeptide: Large ribosomal subunit protein bL20 (118 aa).

The protein belongs to the bacterial ribosomal protein bL20 family.

In terms of biological role, binds directly to 23S ribosomal RNA and is necessary for the in vitro assembly process of the 50S ribosomal subunit. It is not involved in the protein synthesizing functions of that subunit. In Klebsiella pneumoniae (strain 342), this protein is Large ribosomal subunit protein bL20.